The primary structure comprises 503 residues: UDP-N-acetylmuramoylalanine--D-glutamate ligase (503 aa).

Residue G129–T135 participates in ATP binding.

This sequence belongs to the MurCDEF family.

Its subcellular location is the cytoplasm. The catalysed reaction is UDP-N-acetyl-alpha-D-muramoyl-L-alanine + D-glutamate + ATP = UDP-N-acetyl-alpha-D-muramoyl-L-alanyl-D-glutamate + ADP + phosphate + H(+). It functions in the pathway cell wall biogenesis; peptidoglycan biosynthesis. In terms of biological role, cell wall formation. Catalyzes the addition of glutamate to the nucleotide precursor UDP-N-acetylmuramoyl-L-alanine (UMA). This chain is UDP-N-acetylmuramoylalanine--D-glutamate ligase, found in Burkholderia orbicola (strain MC0-3).